We begin with the raw amino-acid sequence, 140 residues long: Cysteine desulfuration protein SufE (140 aa).

Cys51 serves as the catalytic Cysteine persulfide intermediate.

The protein belongs to the SufE family. Homodimer. Interacts with SufS.

It localises to the cytoplasm. The protein operates within cofactor biosynthesis; iron-sulfur cluster biosynthesis. Functionally, participates in cysteine desulfuration mediated by SufS. Cysteine desulfuration mobilizes sulfur from L-cysteine to yield L-alanine and constitutes an essential step in sulfur metabolism for biosynthesis of a variety of sulfur-containing biomolecules. Functions as a sulfur acceptor for SufS, by mediating the direct transfer of the sulfur atom from the S-sulfanylcysteine of SufS, an intermediate product of cysteine desulfuration process. The polypeptide is Cysteine desulfuration protein SufE (Yersinia pseudotuberculosis serotype O:1b (strain IP 31758)).